Here is a 156-residue protein sequence, read N- to C-terminus: MRNSDKQERLIKAFKSILKDEKFSSQGEIVDALKAQGFDNINQSKVSRMLTKFGAVRTRNAKMEMVYCLPIELGVPTTTSPLKELVMEVGHNSALVVIHTGPGAAQVIARLLDSLGKAEGILGVVAGDDTIFITPTNTTTTEELFNSVCDLFDYSI.

This sequence belongs to the ArgR family.

It localises to the cytoplasm. It functions in the pathway amino-acid biosynthesis; L-arginine biosynthesis [regulation]. In terms of biological role, regulates arginine biosynthesis genes. The polypeptide is Arginine repressor (Photobacterium profundum (strain SS9)).